We begin with the raw amino-acid sequence, 1132 residues long: Phytochrome B (1132 aa).

Residues 1 to 11 show a composition bias toward basic residues; the sequence is MASGSRTKHSH. Residues 1–27 are disordered; sequence MASGSRTKHSHQSGQGQVQAQSSGTSN. Residues 12–26 are compositionally biased toward low complexity; it reads QSGQGQVQAQSSGTS. One can recognise a GAF domain in the interval 231–409; that stretch reads DVKLLCDTVV…AFGLQLNMEL (179 aa). A phytochromobilin-binding site is contributed by C336. 2 PAS domains span residues 623–694 and 757–828; these read VARE…LRGE and DYKA…MIVL. The Histidine kinase domain occupies 905-1125; it reads YLCQEIKSPL…LIILDLPMTR (221 aa).

This sequence belongs to the phytochrome family. Homodimer. Post-translationally, contains one covalently linked phytochromobilin chromophore.

Functionally, regulatory photoreceptor which exists in two forms that are reversibly interconvertible by light: the Pr form that absorbs maximally in the red region of the spectrum and the Pfr form that absorbs maximally in the far-red region. Photoconversion of Pr to Pfr induces an array of morphogenic responses, whereas reconversion of Pfr to Pr cancels the induction of those responses. Pfr controls the expression of a number of nuclear genes including those encoding the small subunit of ribulose-bisphosphate carboxylase, chlorophyll A/B binding protein, protochlorophyllide reductase, rRNA, etc. It also controls the expression of its own gene(s) in a negative feedback fashion. The polypeptide is Phytochrome B (PHYB) (Nicotiana tabacum (Common tobacco)).